Here is a 296-residue protein sequence, read N- to C-terminus: Ribonuclease H2 subunit A (296 aa).

An RNase H type-2 domain is found at 14 to 236 (PCLMGIDEAG…CTTHLKGEVE (223 aa)). Asp20, Glu21, and Asp127 together coordinate a divalent metal cation.

This sequence belongs to the RNase HII family. Eukaryotic subfamily. Mn(2+) is required as a cofactor. Requires Mg(2+) as cofactor.

The catalysed reaction is Endonucleolytic cleavage to 5'-phosphomonoester.. Its function is as follows. Catalytic subunit of RNase HII, an endonuclease that specifically degrades the RNA of RNA:DNA hybrids. Participates in DNA replication, possibly by mediating the removal of lagging-strand Okazaki fragment RNA primers during DNA replication. Mediates the excision of single ribonucleotides from DNA:RNA duplexes. This Arabidopsis thaliana (Mouse-ear cress) protein is Ribonuclease H2 subunit A.